The primary structure comprises 221 residues: Ras-related protein Rab-27A (221 aa).

Ser-2 is modified (N-acetylserine). Phosphoserine is present on Ser-2. 16 to 24 provides a ligand contact to GTP; it reads GDSGVGKTS. An Effector region motif is present at residues 38–46; that stretch reads FITTVGIDF. Residues 74 to 78, 133 to 136, and 163 to 165 contribute to the GTP site; these read DTAGQ, NKSD, and SAA. Cys-123 and Cys-188 form a disulfide bridge. S-geranylgeranyl cysteine attachment occurs at residues Cys-219 and Cys-221. Cysteine methyl ester is present on Cys-221.

It belongs to the small GTPase superfamily. Rab family. In terms of assembly, binds SYTL1, SLAC2B, MYRIP, SYTL3, SYTL4 and SYTL5. Interacts with RPH3A and RPH3A. Binds MLPH and SYTL2. Interacts with UNC13D. Does not interact with the BLOC-3 complex (heterodimer of HPS1 and HPS4). Interacts (GDP-bound form preferentially) with DENND10.

The protein localises to the membrane. Its subcellular location is the melanosome. It is found in the late endosome. It localises to the lysosome. It carries out the reaction GTP + H2O = GDP + phosphate + H(+). Regulated by guanine nucleotide exchange factors (GEFs) which promote the exchange of bound GDP for free GTP, GTPase activating proteins (GAPs) which increase the GTP hydrolysis activity, and GDP dissociation inhibitors which inhibit the dissociation of the nucleotide from the GTPase. Activated by GEFs such as DENND10. In terms of biological role, small GTPase which cycles between active GTP-bound and inactive GDP-bound states. In its active state, binds to a variety of effector proteins to regulate homeostasis of late endocytic pathway, including endosomal positioning, maturation and secretion. Plays a role in cytotoxic granule exocytosis in lymphocytes. Required for both granule maturation and granule docking and priming at the immunologic synapse. The chain is Ras-related protein Rab-27A (RAB27A) from Canis lupus familiaris (Dog).